A 452-amino-acid chain; its full sequence is 1-aminocyclopropane-1-carboxylate synthase 3 (452 aa).

Lys283 carries the N6-(pyridoxal phosphate)lysine modification.

Belongs to the class-I pyridoxal-phosphate-dependent aminotransferase family. Requires pyridoxal 5'-phosphate as cofactor. In terms of tissue distribution, expressed in leaves. Expressed in roots and leaf blades. Expressed at low levels in leaf sheaths and shoot bases.

The catalysed reaction is S-adenosyl-L-methionine = 1-aminocyclopropane-1-carboxylate + S-methyl-5'-thioadenosine + H(+). The protein operates within alkene biosynthesis; ethylene biosynthesis via S-adenosyl-L-methionine; ethylene from S-adenosyl-L-methionine: step 1/2. Catalyzes the formation of 1-aminocyclopropane-1-carboxylate, a direct precursor of ethylene in higher plants. This chain is 1-aminocyclopropane-1-carboxylate synthase 3, found in Oryza sativa subsp. japonica (Rice).